The following is a 122-amino-acid chain: Large ribosomal subunit protein uL14 (122 aa).

This sequence belongs to the universal ribosomal protein uL14 family. As to quaternary structure, part of the 50S ribosomal subunit. Forms a cluster with proteins L3 and L19. In the 70S ribosome, L14 and L19 interact and together make contacts with the 16S rRNA in bridges B5 and B8.

Its function is as follows. Binds to 23S rRNA. Forms part of two intersubunit bridges in the 70S ribosome. The protein is Large ribosomal subunit protein uL14 of Thermus aquaticus.